The following is a 348-amino-acid chain: Ferrochelatase (348 aa).

The Fe cation site is built by His218 and Glu299.

It belongs to the ferrochelatase family.

Its subcellular location is the cytoplasm. It catalyses the reaction heme b + 2 H(+) = protoporphyrin IX + Fe(2+). Its pathway is porphyrin-containing compound metabolism; protoheme biosynthesis; protoheme from protoporphyrin-IX: step 1/1. Its function is as follows. Catalyzes the ferrous insertion into protoporphyrin IX. The chain is Ferrochelatase from Methylocella silvestris (strain DSM 15510 / CIP 108128 / LMG 27833 / NCIMB 13906 / BL2).